Here is a 280-residue protein sequence, read N- to C-terminus: Diaminopimelate epimerase (280 aa).

Residues N11 and N62 each contribute to the substrate site. C71 (proton donor) is an active-site residue. Substrate is bound by residues 72-73, N160, N193, and 211-212; these read GN and ER. The active-site Proton acceptor is the C220. 221–222 serves as a coordination point for substrate; it reads GT.

This sequence belongs to the diaminopimelate epimerase family. Homodimer.

The protein resides in the cytoplasm. It carries out the reaction (2S,6S)-2,6-diaminopimelate = meso-2,6-diaminopimelate. The protein operates within amino-acid biosynthesis; L-lysine biosynthesis via DAP pathway; DL-2,6-diaminopimelate from LL-2,6-diaminopimelate: step 1/1. Functionally, catalyzes the stereoinversion of LL-2,6-diaminopimelate (L,L-DAP) to meso-diaminopimelate (meso-DAP), a precursor of L-lysine and an essential component of the bacterial peptidoglycan. In Acetivibrio thermocellus (strain ATCC 27405 / DSM 1237 / JCM 9322 / NBRC 103400 / NCIMB 10682 / NRRL B-4536 / VPI 7372) (Clostridium thermocellum), this protein is Diaminopimelate epimerase.